The sequence spans 551 residues: Chaperonin GroEL (551 aa).

Residues 30-33 (TLGP), lysine 51, 87-91 (DGTTT), glycine 415, 479-481 (NAA), and aspartate 495 contribute to the ATP site. The disordered stretch occupies residues 523 to 551 (DSPKEDKSSDMPSPSAGGMGGMGGMGGMM). Over residues 539-551 (GGMGGMGGMGGMM) the composition is skewed to gly residues.

This sequence belongs to the chaperonin (HSP60) family. As to quaternary structure, forms a cylinder of 14 subunits composed of two heptameric rings stacked back-to-back. Interacts with the co-chaperonin GroES.

It localises to the cytoplasm. It catalyses the reaction ATP + H2O + a folded polypeptide = ADP + phosphate + an unfolded polypeptide.. Its function is as follows. Together with its co-chaperonin GroES, plays an essential role in assisting protein folding. The GroEL-GroES system forms a nano-cage that allows encapsulation of the non-native substrate proteins and provides a physical environment optimized to promote and accelerate protein folding. This chain is Chaperonin GroEL, found in Buchnera aphidicola subsp. Chaetophorus leucomelas.